Reading from the N-terminus, the 185-residue chain is Elongation factor P (185 aa).

This sequence belongs to the elongation factor P family.

Its subcellular location is the cytoplasm. The protein operates within protein biosynthesis; polypeptide chain elongation. Its function is as follows. Involved in peptide bond synthesis. Stimulates efficient translation and peptide-bond synthesis on native or reconstituted 70S ribosomes in vitro. Probably functions indirectly by altering the affinity of the ribosome for aminoacyl-tRNA, thus increasing their reactivity as acceptors for peptidyl transferase. The protein is Elongation factor P of Brevibacillus brevis (strain 47 / JCM 6285 / NBRC 100599).